The primary structure comprises 671 residues: Diguanylate cyclase DgcP (671 aa).

Disordered regions lie at residues 204 to 223 and 278 to 298; these read AAPSLPVAEHDEAPGGPPQP and EAGAEPSPAMPADVESAPEAP. Asp549 is a Mg(2+) binding site. Substrate-binding residues include Asn557, His562, and Asp566. Position 592 (Glu592) interacts with Mg(2+). Residue Glu592 is part of the active site.

Homodimer. Mg(2+) is required as a cofactor.

It is found in the cell inner membrane. The enzyme catalyses 2 GTP = 3',3'-c-di-GMP + 2 diphosphate. Its pathway is purine metabolism; 3',5'-cyclic di-GMP biosynthesis. Its function is as follows. Catalyzes the synthesis of cyclic-di-GMP (c-di-GMP) via the condensation of 2 GTP molecules. Cyclic-di-GMP is a second messenger which controls cell surface-associated traits in bacteria. Localizes at the cell poles through interaction with FimV where it increases the local pools of c-di-GMP. The polypeptide is Diguanylate cyclase DgcP (dgcP) (Pseudomonas aeruginosa (strain ATCC 15692 / DSM 22644 / CIP 104116 / JCM 14847 / LMG 12228 / 1C / PRS 101 / PAO1)).